Reading from the N-terminus, the 134-residue chain is Photosystem II assembly factor lipoprotein Psb27 (134 aa).

Residues 1–21 (MKRFWAMVCALFLSVSLLLTS) form the signal peptide. Cysteine 22 carries N-palmitoyl cysteine lipidation. Residue cysteine 22 is the site of S-diacylglycerol cysteine attachment.

The protein belongs to the Psb27 family. As to quaternary structure, part of a photosystem II (PSII) assembly intermediate complex PSII-I; crystallized from a strain deleted of psbJ, it forms monomeric PSII before addition of the oxygen evolving complex. PSII-I includes 3 assembly factors not found in mature PSII (Psb27, Psb28 and Psb34). Binds to the lumenal side of PSII, adjacent to the CP43 (psbC) subunit.

It is found in the cellular thylakoid membrane. Functionally, plays a role in the repair and/or biogenesis of the calcium-manganese-oxide cluster on the lumenal face of the thylakoid membrane. Its presence in a photosystem II (PSII) preparation prevents binding of other extrinsic subunits PsbO, PsbU and PsbV, and thus assembly of calcium-manganese-oxide cluster. Psb27-containing complexes lack oxygen evolving activity and an oxidizable calcium-manganese-oxide cluster, but have a normal reaction center. This is Photosystem II assembly factor lipoprotein Psb27 from Thermosynechococcus vestitus (strain NIES-2133 / IAM M-273 / BP-1).